Reading from the N-terminus, the 528-residue chain is MSQPSSDGQRQPAIVILDFGSQYSELIARRVRETEVFSVVIGYSTTADELRRMAPKGIILSGGPSSVYAEHAPVCDPAIWDLGIPVLGVCYGMQLMVQQLGGAVEAATGKAEYGKAPLEVDDPTDLLNNVENGSTMWMSHGDSVKALPEGFVRLAHTANTPEAAVANLERKFYGVQFHPEVVHSTCGMALIRNFVNHICGCEQDWTTNAFIDEAVALVREQVGQKRVLLALSGGVDSSTLAFLLKKAIGDQLTCMFIDQGFMRKGEPEFLMEFFDQKFNINVEYINARKRFIDKLKGITDPEDKRKIIGTEFIRVFEEESKRLGPFDYLAQGTLYPDVIESAGTNVDPKTGERVAVKIKSHHNVGGLPKDLRFKLVEPLRKLFKDEVRKVGRNLGLPEEIVRRHPFPGPGLAIRILGEVTDEKLNCLRDADLIVREEIRDAGLYHDIWQAFAVLLPVRSVGVMGDQRTYAWPIVLRCVSSEDGMTADWSRLPYDLMERISNRIVNEVKGVNRVVMDITSKPPGTIEWE.

The Glutamine amidotransferase type-1 domain occupies 13-204 (AIVILDFGSQ…VNHICGCEQD (192 aa)). The active-site Nucleophile is Cys-90. Catalysis depends on residues His-178 and Glu-180. In terms of domain architecture, GMPS ATP-PPase spans 205–403 (WTTNAFIDEA…LGLPEEIVRR (199 aa)). Position 232 to 238 (232 to 238 (SGGVDSS)) interacts with ATP.

Homodimer.

The enzyme catalyses XMP + L-glutamine + ATP + H2O = GMP + L-glutamate + AMP + diphosphate + 2 H(+). Its pathway is purine metabolism; GMP biosynthesis; GMP from XMP (L-Gln route): step 1/1. Functionally, catalyzes the synthesis of GMP from XMP. The chain is GMP synthase [glutamine-hydrolyzing] from Synechococcus sp. (strain CC9902).